Reading from the N-terminus, the 548-residue chain is CTP synthase (548 aa).

Residues 1–266 (MRVNYIFVTG…DNYICKRFNL (266 aa)) are amidoligase domain. CTP is bound at residue S14. S14 serves as a coordination point for UTP. Residues 15-20 (SLGKGI) and D72 each bind ATP. Mg(2+)-binding residues include D72 and E140. CTP-binding positions include 147–149 (DIE), 187–192 (KTKPTQ), and K223. UTP-binding positions include 187 to 192 (KTKPTQ) and K223. The region spanning 291-543 (TVGMVGKYIE…IKAAIEYQHR (253 aa)) is the Glutamine amidotransferase type-1 domain. Residue G353 coordinates L-glutamine. C380 (nucleophile; for glutamine hydrolysis) is an active-site residue. Residues 381 to 384 (LGMQ), E404, and R471 contribute to the L-glutamine site. Residues H516 and E518 contribute to the active site.

It belongs to the CTP synthase family. In terms of assembly, homotetramer.

The enzyme catalyses UTP + L-glutamine + ATP + H2O = CTP + L-glutamate + ADP + phosphate + 2 H(+). It catalyses the reaction L-glutamine + H2O = L-glutamate + NH4(+). It carries out the reaction UTP + NH4(+) + ATP = CTP + ADP + phosphate + 2 H(+). Its pathway is pyrimidine metabolism; CTP biosynthesis via de novo pathway; CTP from UDP: step 2/2. With respect to regulation, allosterically activated by GTP, when glutamine is the substrate; GTP has no effect on the reaction when ammonia is the substrate. The allosteric effector GTP functions by stabilizing the protein conformation that binds the tetrahedral intermediate(s) formed during glutamine hydrolysis. Inhibited by the product CTP, via allosteric rather than competitive inhibition. Its function is as follows. Catalyzes the ATP-dependent amination of UTP to CTP with either L-glutamine or ammonia as the source of nitrogen. Regulates intracellular CTP levels through interactions with the four ribonucleotide triphosphates. The polypeptide is CTP synthase (Blochmanniella pennsylvanica (strain BPEN)).